Here is a 126-residue protein sequence, read N- to C-terminus: Aspartate 1-decarboxylase (126 aa).

The active-site Schiff-base intermediate with substrate; via pyruvic acid is serine 25. Serine 25 bears the Pyruvic acid (Ser) mark. Threonine 57 is a substrate binding site. The Proton donor role is filled by tyrosine 58. Residue 73–75 (GGA) coordinates substrate.

It belongs to the PanD family. Heterooctamer of four alpha and four beta subunits. Requires pyruvate as cofactor. Post-translationally, is synthesized initially as an inactive proenzyme, which is activated by self-cleavage at a specific serine bond to produce a beta-subunit with a hydroxyl group at its C-terminus and an alpha-subunit with a pyruvoyl group at its N-terminus.

It localises to the cytoplasm. It carries out the reaction L-aspartate + H(+) = beta-alanine + CO2. It functions in the pathway cofactor biosynthesis; (R)-pantothenate biosynthesis; beta-alanine from L-aspartate: step 1/1. Its function is as follows. Catalyzes the pyruvoyl-dependent decarboxylation of aspartate to produce beta-alanine. In Xanthomonas campestris pv. campestris (strain B100), this protein is Aspartate 1-decarboxylase.